A 328-amino-acid chain; its full sequence is Malate dehydrogenase (328 aa).

Position 12-18 (12-18) interacts with NAD(+); that stretch reads GAAGQIG. Positions 95 and 101 each coordinate substrate. NAD(+) contacts are provided by residues asparagine 108, glutamine 115, and 132–134; that span reads VGN. The substrate site is built by asparagine 134 and arginine 165. The active-site Proton acceptor is the histidine 190.

This sequence belongs to the LDH/MDH superfamily. MDH type 2 family.

The enzyme catalyses (S)-malate + NAD(+) = oxaloacetate + NADH + H(+). In terms of biological role, catalyzes the reversible oxidation of malate to oxaloacetate. The chain is Malate dehydrogenase from Polaromonas sp. (strain JS666 / ATCC BAA-500).